We begin with the raw amino-acid sequence, 307 residues long: Nucleotide-binding protein Acid345_3782 (307 aa).

31 to 38 (GLSGSGKA) is an ATP binding site. 81–84 (DIRE) is a binding site for GTP.

It belongs to the RapZ-like family.

In terms of biological role, displays ATPase and GTPase activities. This chain is Nucleotide-binding protein Acid345_3782, found in Koribacter versatilis (strain Ellin345).